Reading from the N-terminus, the 284-residue chain is Nodulation protein O (284 aa).

The disordered stretch occupies residues 1–27 (MNIKGSDNGSFIKGSPENDIIDGGKKN). 5 Hemolysin-type calcium-binding repeats span residues 13 to 30 (KGSP…NDWI), 31 to 48 (DAGN…QDSI), 58 to 75 (WAGK…DDLL), 94 to 111 (HSGE…SDIL), and 112 to 129 (VAGD…GDAF). Asp-100, Asp-109, Asp-118, and Asp-127 together coordinate Ca(2+). The segment at 208–222 (DRGFASAAAAATAID) is export signal (aspartic acid box).

It localises to the secreted. In terms of biological role, the NodO protein may play a role in nodule development by direct interaction with the root hair cells or some other plant surface in a calcium-dependent manner. This is Nodulation protein O (nodO) from Rhizobium leguminosarum bv. viciae.